The primary structure comprises 232 residues: uncharacterized protein (232 aa).

Positions 119-145 (DEEYRENSKAPEAKARPSFVGEGRRLG) are disordered. Positions 123 to 133 (RENSKAPEAKA) are enriched in basic and acidic residues.

This is an uncharacterized protein from Encephalitozoon cuniculi (strain GB-M1) (Microsporidian parasite).